A 469-amino-acid chain; its full sequence is UDP-N-acetylmuramoylalanine--D-glutamate ligase (469 aa).

121 to 127 (GTNGKST) contacts ATP.

This sequence belongs to the MurCDEF family.

Its subcellular location is the cytoplasm. It carries out the reaction UDP-N-acetyl-alpha-D-muramoyl-L-alanine + D-glutamate + ATP = UDP-N-acetyl-alpha-D-muramoyl-L-alanyl-D-glutamate + ADP + phosphate + H(+). It participates in cell wall biogenesis; peptidoglycan biosynthesis. In terms of biological role, cell wall formation. Catalyzes the addition of glutamate to the nucleotide precursor UDP-N-acetylmuramoyl-L-alanine (UMA). In Rhodopseudomonas palustris (strain ATCC BAA-98 / CGA009), this protein is UDP-N-acetylmuramoylalanine--D-glutamate ligase.